The sequence spans 805 residues: Polyribonucleotide nucleotidyltransferase (805 aa).

Mg(2+) is bound by residues Asp-491 and Asp-497. A KH domain is found at 558-617 (PRMESMIIDKNKIKNVIGTGGKNVREICEKTGVKIEISQDGTVMIYAVSRDAVEEAKNMI). The 68-residue stretch at 627–694 (GKVFSGVISE…DKDHVQLSMR (68 aa)) folds into the S1 motif domain. The tract at residues 702–805 (DLLEHESYSS…GGGNKKPRFF (104 aa)) is disordered. The segment covering 709 to 721 (YSSSKKNGPQSGD) has biased composition (polar residues).

The protein belongs to the polyribonucleotide nucleotidyltransferase family. The cofactor is Mg(2+).

Its subcellular location is the cytoplasm. The catalysed reaction is RNA(n+1) + phosphate = RNA(n) + a ribonucleoside 5'-diphosphate. In terms of biological role, involved in mRNA degradation. Catalyzes the phosphorolysis of single-stranded polyribonucleotides processively in the 3'- to 5'-direction. In Anaplasma marginale (strain St. Maries), this protein is Polyribonucleotide nucleotidyltransferase.